We begin with the raw amino-acid sequence, 353 residues long: S-adenosylmethionine:tRNA ribosyltransferase-isomerase (353 aa).

Belongs to the QueA family. In terms of assembly, monomer.

It is found in the cytoplasm. It carries out the reaction 7-aminomethyl-7-carbaguanosine(34) in tRNA + S-adenosyl-L-methionine = epoxyqueuosine(34) in tRNA + adenine + L-methionine + 2 H(+). Its pathway is tRNA modification; tRNA-queuosine biosynthesis. In terms of biological role, transfers and isomerizes the ribose moiety from AdoMet to the 7-aminomethyl group of 7-deazaguanine (preQ1-tRNA) to give epoxyqueuosine (oQ-tRNA). The polypeptide is S-adenosylmethionine:tRNA ribosyltransferase-isomerase (Maricaulis maris (strain MCS10) (Caulobacter maris)).